The primary structure comprises 95 residues: RING finger protein Z (95 aa).

The N-myristoyl glycine; by host moiety is linked to residue glycine 2. Residues 38-74 form an RING-type; atypical zinc finger; that stretch reads CKSCWFANKGLLKCSNHYLCLKCLTLMLRRSDYCGIC. A PTAP/PSAP motif motif is present at residues 88–91; sequence PSAP.

Belongs to the arenaviridae Z protein family. In terms of assembly, interacts with protein NP; this interaction probably directs the encapsidated genome to budding sites. Interacts (via RING domain) with polymerase L; this interaction inhibits viral transcription and replication, Z partially blocks the product exit tunnel for the releasing nascent RNA product. Interacts with the glycoprotein complex; this interaction plays a role in virion budding. Interacts with host eIF4E; this interaction results in eIF4E reduced affinity for its substrate, the 5'-m7 G cap structure. Interacts (via late-budding domain) with host TSG101; this interaction is essential for budding and release of viral particles. Interacts with host RPLP0; this interaction may serve to load ribosome-like particles inside the virion. Interacts with host PML; this interaction induces PML bodies redistribution in the cytoplasm upon viral infection. Post-translationally, myristoylation is required for the role of RING finger protein Z in assembly and budding.

The protein localises to the virion. The protein resides in the host cytoplasm. Its subcellular location is the host perinuclear region. It is found in the host cell membrane. In terms of biological role, plays a crucial role in virion assembly and budding. Expressed late in the virus life cycle, it acts as an inhibitor of viral transcription and RNA synthesis by interacting with the viral polymerase L. Presumably recruits the NP encapsidated genome to cellular membranes at budding sites via direct interaction with NP. Plays critical roles in the final steps of viral release by interacting with host TSG101, a member of the vacuolar protein-sorting pathway and using other cellular host proteins involved in vesicle formation pathway. The budding of the virus progeny occurs after association of protein Z with the viral glycoprotein complex SSP-GP1-GP2 at the cell periphery, step that requires myristoylation of protein Z. Also selectively represses protein production by associating with host eIF4E. In cell-based minigenome assay, has an inhibitory effect on the ribonucleoprotein machinery (vRNP), which is responsible for the replication and transcription of the viral genome. The chain is RING finger protein Z from Neotoma (wood rats).